The sequence spans 509 residues: 2-isopropylmalate synthase (509 aa).

Residues 5-267 enclose the Pyruvate carboxyltransferase domain; the sequence is IQIFDTTLRD…QTALNLEETK (263 aa). Mn(2+)-binding residues include aspartate 14, histidine 202, histidine 204, and asparagine 238. The segment at 391-509 is regulatory domain; the sequence is KLETLQLQYV…AAENVEKVGN (119 aa).

It belongs to the alpha-IPM synthase/homocitrate synthase family. LeuA type 1 subfamily. Homodimer. Mn(2+) serves as cofactor.

The protein resides in the cytoplasm. It carries out the reaction 3-methyl-2-oxobutanoate + acetyl-CoA + H2O = (2S)-2-isopropylmalate + CoA + H(+). It functions in the pathway amino-acid biosynthesis; L-leucine biosynthesis; L-leucine from 3-methyl-2-oxobutanoate: step 1/4. In terms of biological role, catalyzes the condensation of the acetyl group of acetyl-CoA with 3-methyl-2-oxobutanoate (2-ketoisovalerate) to form 3-carboxy-3-hydroxy-4-methylpentanoate (2-isopropylmalate). This is 2-isopropylmalate synthase from Staphylococcus aureus (strain USA300).